A 111-amino-acid chain; its full sequence is Phosphoribosyl-ATP pyrophosphatase (111 aa).

This sequence belongs to the PRA-PH family.

It is found in the cytoplasm. It carries out the reaction 1-(5-phospho-beta-D-ribosyl)-ATP + H2O = 1-(5-phospho-beta-D-ribosyl)-5'-AMP + diphosphate + H(+). The protein operates within amino-acid biosynthesis; L-histidine biosynthesis; L-histidine from 5-phospho-alpha-D-ribose 1-diphosphate: step 2/9. The sequence is that of Phosphoribosyl-ATP pyrophosphatase from Pseudomonas entomophila (strain L48).